Consider the following 185-residue polypeptide: dTTP/UTP pyrophosphatase (185 aa).

D64 (proton acceptor) is an active-site residue.

The protein belongs to the Maf family. YhdE subfamily. Requires a divalent metal cation as cofactor.

The protein localises to the cytoplasm. The enzyme catalyses dTTP + H2O = dTMP + diphosphate + H(+). It carries out the reaction UTP + H2O = UMP + diphosphate + H(+). Functionally, nucleoside triphosphate pyrophosphatase that hydrolyzes dTTP and UTP. May have a dual role in cell division arrest and in preventing the incorporation of modified nucleotides into cellular nucleic acids. In Thermococcus gammatolerans (strain DSM 15229 / JCM 11827 / EJ3), this protein is dTTP/UTP pyrophosphatase.